Reading from the N-terminus, the 433-residue chain is Enolase (433 aa).

A (2R)-2-phosphoglycerate-binding site is contributed by Q167. Catalysis depends on E209, which acts as the Proton donor. D246, E291, and D318 together coordinate Mg(2+). Positions 343, 372, 373, and 394 each coordinate (2R)-2-phosphoglycerate. K343 serves as the catalytic Proton acceptor.

The protein belongs to the enolase family. As to quaternary structure, component of the RNA degradosome, a multiprotein complex involved in RNA processing and mRNA degradation. Requires Mg(2+) as cofactor.

The protein resides in the cytoplasm. It is found in the secreted. The protein localises to the cell surface. The catalysed reaction is (2R)-2-phosphoglycerate = phosphoenolpyruvate + H2O. Its pathway is carbohydrate degradation; glycolysis; pyruvate from D-glyceraldehyde 3-phosphate: step 4/5. Functionally, catalyzes the reversible conversion of 2-phosphoglycerate (2-PG) into phosphoenolpyruvate (PEP). It is essential for the degradation of carbohydrates via glycolysis. In Aeromonas hydrophila subsp. hydrophila (strain ATCC 7966 / DSM 30187 / BCRC 13018 / CCUG 14551 / JCM 1027 / KCTC 2358 / NCIMB 9240 / NCTC 8049), this protein is Enolase.